We begin with the raw amino-acid sequence, 412 residues long: Inositol polyphosphate-5-phosphatase A (412 aa).

Cys-409 carries S-farnesyl cysteine lipidation. Residues 410–412 (VVQ) constitute a propeptide, removed in mature form.

Belongs to the inositol 1,4,5-trisphosphate 5-phosphatase type I family. Interacts with TASOR. Post-translationally, isoprenylation at Cys-409 is required for localization at the membrane. Predominantly expressed in heart, brain, and skeletal muscle. In brain; high level in Purkinje cells.

It is found in the cell membrane. It localises to the cell projection. The protein resides in the dendrite. The enzyme catalyses 1D-myo-inositol 1,4,5-trisphosphate + H2O = 1D-myo-inositol 1,4-bisphosphate + phosphate. The catalysed reaction is 1D-myo-inositol 1,3,4,5-tetrakisphosphate + H2O = 1D-myo-inositol 1,3,4-trisphosphate + phosphate. In terms of biological role, phosphatase that specifically hydrolyzes the 5-phosphate of inositol 1,4,5-trisphosphate to inositol 1,4-bisphosphate, and inositol 1,3,4,5-tetrasphosphate to inositol 1,3,4-trisphosphate. Plays a crucial role in the survival of cerebellar Purkinje cells. The sequence is that of Inositol polyphosphate-5-phosphatase A from Homo sapiens (Human).